A 181-amino-acid polypeptide reads, in one-letter code: Phospholipase A2 inhibitor gamma subunit B (181 aa).

8 disulfides stabilise this stretch: C3–C27, C6–C13, C20–C48, C54–C75, C76–C81, C101–C126, C119–C146, and C152–C172.

This sequence belongs to the CNF-like-inhibitor family. As to quaternary structure, heterotrimer of 2 subunits A and 1 subunit B. Expressed by the liver.

Its subcellular location is the secreted. Strongly inhibits its own venom PLA2 and all other PLA2s tested including Elapid, Crotalid and Viperid venom PLA2s, as well as honeybee PLA2s. The polypeptide is Phospholipase A2 inhibitor gamma subunit B (Laticauda semifasciata (Black-banded sea krait)).